A 517-amino-acid polypeptide reads, in one-letter code: UDP-N-acetylmuramyl-tripeptide synthetase (517 aa).

T48 contributes to the UDP-N-acetyl-alpha-D-muramoyl-L-alanyl-D-glutamate binding site. Residue 125–131 (GTKGKTT) participates in ATP binding. UDP-N-acetyl-alpha-D-muramoyl-L-alanyl-D-glutamate-binding positions include 169–170 (TT), S196, and R204. N6-carboxylysine is present on K238.

It belongs to the MurCDEF family. MurE subfamily. In terms of processing, carboxylation is probably crucial for Mg(2+) binding and, consequently, for the gamma-phosphate positioning of ATP.

The protein resides in the cytoplasm. Its pathway is cell wall biogenesis; peptidoglycan biosynthesis. Functionally, catalyzes the addition of an amino acid to the nucleotide precursor UDP-N-acetylmuramoyl-L-alanyl-D-glutamate (UMAG) in the biosynthesis of bacterial cell-wall peptidoglycan. This chain is UDP-N-acetylmuramyl-tripeptide synthetase, found in Bifidobacterium longum (strain NCC 2705).